We begin with the raw amino-acid sequence, 245 residues long: 1-(5-phosphoribosyl)-5-[(5-phosphoribosylamino)methylideneamino] imidazole-4-carboxamide isomerase (245 aa).

The active-site Proton acceptor is the Asp7. The active-site Proton donor is the Asp129.

Belongs to the HisA/HisF family.

Its subcellular location is the cytoplasm. The enzyme catalyses 1-(5-phospho-beta-D-ribosyl)-5-[(5-phospho-beta-D-ribosylamino)methylideneamino]imidazole-4-carboxamide = 5-[(5-phospho-1-deoxy-D-ribulos-1-ylimino)methylamino]-1-(5-phospho-beta-D-ribosyl)imidazole-4-carboxamide. It functions in the pathway amino-acid biosynthesis; L-histidine biosynthesis; L-histidine from 5-phospho-alpha-D-ribose 1-diphosphate: step 4/9. This Aliivibrio fischeri (strain MJ11) (Vibrio fischeri) protein is 1-(5-phosphoribosyl)-5-[(5-phosphoribosylamino)methylideneamino] imidazole-4-carboxamide isomerase.